Consider the following 551-residue polypeptide: Solute carrier family 22 member 3 (551 aa).

The helical transmembrane segment at 21–41 threads the bilayer; the sequence is VFLLLCLTGVTFAFLFVGVVF. 3 N-linked (GlcNAc...) asparagine glycosylation sites follow: asparagine 72, asparagine 99, and asparagine 114. A helical transmembrane segment spans residues 177-197; the sequence is LIVYLISCFGVGITGVVVAFA. The N-linked (GlcNAc...) asparagine glycan is linked to asparagine 199. 2 consecutive transmembrane segments (helical) span residues 236-256 and 264-284; these read IVGIVIQMFFTLGIIILPGIA and GIQLAISLPSFLFLLYYWVVP. Residues 284–288 carry the Proline-rich sequence motif; that stretch reads PESPR. The N-linked (GlcNAc...) asparagine glycan is linked to asparagine 317. 3 helical membrane passes run 376-396, 463-483, and 493-513; these read MDFFISGLVELPGALLILLTI, FGVSLCSGLCDFGGIIAPFLL, and LPLIIFGILASVCGGLVMLLP.

This sequence belongs to the major facilitator (TC 2.A.1) superfamily. Organic cation transporter (TC 2.A.1.19) family. As to expression, highly expressed in placenta. Expressed in intestine, hear, kidney and lung. Widely expressed in brain, particularly in hippocampus, cerebellum, cerebral cortex. In the brain, expressed predominantly in regions located at the brain-cerebrospinal fluid border, with expression extending to regions that belong to monoaminergic pathways such as raphe nuclei, striatum and thalamus. In brain, expressed in neurons and glial cells of amygdala. Expression is low in kidney and lung and undetectable in liver. Expressed in Sertoli cells in testis. Expressed in tracheal and bronchial epithelium of the respiratory tract, where it localizes to the apical membrane of ciliated and brush cells, and in basal cells.

The protein localises to the cell membrane. Its subcellular location is the apical cell membrane. The protein resides in the basolateral cell membrane. It is found in the mitochondrion membrane. It localises to the endomembrane system. The protein localises to the nucleus membrane. Its subcellular location is the nucleus outer membrane. It carries out the reaction (R)-noradrenaline(out) = (R)-noradrenaline(in). It catalyses the reaction (R)-adrenaline(out) = (R)-adrenaline(in). The enzyme catalyses serotonin(out) = serotonin(in). The catalysed reaction is dopamine(out) = dopamine(in). It carries out the reaction histamine(out) = histamine(in). It catalyses the reaction tyramine(in) = tyramine(out). The enzyme catalyses guanidine(out) = guanidine(in). The catalysed reaction is agmatine(out) = agmatine(in). It carries out the reaction spermidine(in) = spermidine(out). It catalyses the reaction L-histidyl-L-proline diketopiperazine(in) = L-histidyl-L-proline diketopiperazine(out). The enzyme catalyses (R)-salsolinol(in) = (R)-salsolinol(out). Its function is as follows. Electrogenic voltage-dependent transporter that mediates the transport of a variety of organic cations such as endogenous bioactive amines, cationic drugs and xenobiotics. Cation cellular uptake or release is driven by the electrochemical potential, i.e. membrane potential and concentration gradient. Functions as a Na(+)- and Cl(-)-independent, bidirectional uniporter. Implicated in neuronal monoamine neurotransmitters cellular uptake such as dopamine, adrenaline/epinephrine, noradrenaline/norepinephrine, histamine, serotonin and tyramine, thereby supporting a role in homeostatic regulation of aminergic neurotransmission in the brain. Transports dopaminergic neuromodulators cyclo(his-pro) and salsolinol with low efficiency. May be involved in the uptake and disposition of cationic compounds by renal clearance from the blood flow. May contribute to regulate the transport of cationic compounds in testis across the blood-testis-barrier. Mediates the transport of polyamine spermidine and putrescine. Mediates the bidirectional transport of polyamine agmatine. Also transports guanidine. May also mediate intracellular transport of organic cations, thereby playing a role in amine metabolism and intracellular signaling. In Rattus norvegicus (Rat), this protein is Solute carrier family 22 member 3.